The primary structure comprises 79 residues: Spidroin-1 (79 aa).

The protein belongs to the silk fibroin family. As to quaternary structure, major subunit, with spidroin 2, of the dragline silk.

It localises to the secreted. It is found in the extracellular space. In terms of biological role, spiders' major ampullate silk possesses unique characteristics of strength and elasticity. Fibroin consists of pseudocrystalline regions of antiparallel beta-sheet interspersed with elastic amorphous segments. The sequence is that of Spidroin-1 from Araneus bicentenarius (Giant lichen orbweaver).